The following is a 591-amino-acid chain: MRRLLTLILLLVALPAGAGLFDSRPGASLGGGLDGGGFLKVDQAFKPSVERSDAQHVLLRFVNAEGYYLYRHRFQFKVEPAQVSLGQVQLPAGKQHHDEYFGDTEVYYNIVDLEIPLNNPARQPYTLVVTYQGCADKGLCYPPETRRFDIDGGAATPAASDAAGKGPLEHKGKRSLLFFFLAGLTLTFTPCVLPMLPILSGVVLRGRPGGGRGFVLSLAYVLPMALCFALLGALMGMFGASLNLQAQLQSPWVLVPFAAFFALFAVAMFGFFELRLPGFIREPLDRLAGDARGGSILGAATLGVLSSLLVSPCVSAPLAASLLYISASGDAWGGGLQLFALGLGMGTPLVVFGAGGGALLPKSGAWMNGVRNAFGVLLLAVAVWLLERVVSGPVALMLWGMLAGGAGLALGALEFTPKSAARRLLQLLGLMFLTYAVAAWIGALQGESDPIHPLGRSVPSIHAGPPSTPGEWQNLTTPAQLDAALAEARQAGKPVLLDWYADWCISCKVIERQVLTDPTVQARLPAYRLLRFDITESNPAQRGLLDRYNLFGPPAILFFAPGGDEWSDLRVIGEIDAAGLAERLRRAATRQ.

The first 18 residues, 1–18, serve as a signal peptide directing secretion; it reads MRRLLTLILLLVALPAGA. Residues 19–175 lie on the Periplasmic side of the membrane; it reads GLFDSRPGAS…GPLEHKGKRS (157 aa). 2 cysteine pairs are disulfide-bonded: C134–C140 and C191–C313. A helical transmembrane segment spans residues 176 to 196; the sequence is LLFFFLAGLTLTFTPCVLPML. Topologically, residues 197-213 are cytoplasmic; that stretch reads PILSGVVLRGRPGGGRG. The helical transmembrane segment at 214-234 threads the bilayer; that stretch reads FVLSLAYVLPMALCFALLGAL. Residues 235-251 lie on the Periplasmic side of the membrane; it reads MGMFGASLNLQAQLQSP. A helical transmembrane segment spans residues 252–272; it reads WVLVPFAAFFALFAVAMFGFF. Over 273-295 the chain is Cytoplasmic; sequence ELRLPGFIREPLDRLAGDARGGS. Residues 296–316 form a helical membrane-spanning segment; sequence ILGAATLGVLSSLLVSPCVSA. The Periplasmic portion of the chain corresponds to 317–338; the sequence is PLAASLLYISASGDAWGGGLQL. A helical transmembrane segment spans residues 339–359; that stretch reads FALGLGMGTPLVVFGAGGGAL. Over 360-365 the chain is Cytoplasmic; it reads LPKSGA. The chain crosses the membrane as a helical span at residues 366–386; it reads WMNGVRNAFGVLLLAVAVWLL. At 387-392 the chain is on the periplasmic side; that stretch reads ERVVSG. A helical membrane pass occupies residues 393 to 413; it reads PVALMLWGMLAGGAGLALGAL. Over 414-423 the chain is Cytoplasmic; sequence EFTPKSAARR. The helical transmembrane segment at 424–444 threads the bilayer; the sequence is LLQLLGLMFLTYAVAAWIGAL. Topologically, residues 445–591 are periplasmic; the sequence is QGESDPIHPL…ERLRRAATRQ (147 aa). Positions 452-589 constitute a Thioredoxin domain; sequence HPLGRSVPSI…LAERLRRAAT (138 aa). C504 and C507 are joined by a disulfide.

The protein belongs to the thioredoxin family. DsbD subfamily.

It localises to the cell inner membrane. It catalyses the reaction [protein]-dithiol + NAD(+) = [protein]-disulfide + NADH + H(+). The enzyme catalyses [protein]-dithiol + NADP(+) = [protein]-disulfide + NADPH + H(+). Its function is as follows. Required to facilitate the formation of correct disulfide bonds in some periplasmic proteins and for the assembly of the periplasmic c-type cytochromes. Acts by transferring electrons from cytoplasmic thioredoxin to the periplasm. This transfer involves a cascade of disulfide bond formation and reduction steps. In Pseudomonas aeruginosa (strain ATCC 15692 / DSM 22644 / CIP 104116 / JCM 14847 / LMG 12228 / 1C / PRS 101 / PAO1), this protein is Thiol:disulfide interchange protein DsbD 1.